A 208-amino-acid polypeptide reads, in one-letter code: Holliday junction branch migration complex subunit RuvA (208 aa).

The interval 1-69 (MIGFLQGYVV…EDQMVLFGFA (69 aa)) is domain I. The tract at residues 70 to 148 (VVAERDLFRQ…EWRDQAGLKT (79 aa)) is domain II. The segment at 149-159 (LPSAGPIDSVQ) is flexible linker. The tract at residues 159–208 (QEDVEMTLLALGYTSQEVMRALQAVGQNTALAKNSDTEAWIREAIAWLSQ) is domain III.

This sequence belongs to the RuvA family. In terms of assembly, homotetramer. Forms an RuvA(8)-RuvB(12)-Holliday junction (HJ) complex. HJ DNA is sandwiched between 2 RuvA tetramers; dsDNA enters through RuvA and exits via RuvB. An RuvB hexamer assembles on each DNA strand where it exits the tetramer. Each RuvB hexamer is contacted by two RuvA subunits (via domain III) on 2 adjacent RuvB subunits; this complex drives branch migration. In the full resolvosome a probable DNA-RuvA(4)-RuvB(12)-RuvC(2) complex forms which resolves the HJ.

The protein resides in the cytoplasm. Functionally, the RuvA-RuvB-RuvC complex processes Holliday junction (HJ) DNA during genetic recombination and DNA repair, while the RuvA-RuvB complex plays an important role in the rescue of blocked DNA replication forks via replication fork reversal (RFR). RuvA specifically binds to HJ cruciform DNA, conferring on it an open structure. The RuvB hexamer acts as an ATP-dependent pump, pulling dsDNA into and through the RuvAB complex. HJ branch migration allows RuvC to scan DNA until it finds its consensus sequence, where it cleaves and resolves the cruciform DNA. This Acaryochloris marina (strain MBIC 11017) protein is Holliday junction branch migration complex subunit RuvA.